We begin with the raw amino-acid sequence, 240 residues long: uncharacterized protein (240 aa).

Residues aspartate 26–lysine 52 are disordered. The chain crosses the membrane as a helical span at residues leucine 57–phenylalanine 77. Residues lysine 100–proline 185 are disordered. Over residues valine 103–alanine 159 the composition is skewed to basic and acidic residues. Residues threonine 160 to proline 185 show a composition bias toward low complexity. A LysM domain is found at valine 189 to isoleucine 235.

The protein resides in the membrane. This is an uncharacterized protein from Bacillus subtilis (strain 168).